We begin with the raw amino-acid sequence, 157 residues long: Dihydrofolate reductase type 5 (157 aa).

The DHFR domain occupies 2–156; the sequence is KVSLMAAKAK…INYCYQIWQK (155 aa).

Belongs to the dihydrofolate reductase family. As to quaternary structure, homodimer.

The catalysed reaction is (6S)-5,6,7,8-tetrahydrofolate + NADP(+) = 7,8-dihydrofolate + NADPH + H(+). It participates in cofactor biosynthesis; tetrahydrofolate biosynthesis; 5,6,7,8-tetrahydrofolate from 7,8-dihydrofolate: step 1/1. Functionally, key enzyme in folate metabolism. Catalyzes an essential reaction for de novo glycine and purine synthesis, and for DNA precursor synthesis. This is Dihydrofolate reductase type 5 (dhfrV) from Escherichia coli.